The chain runs to 232 residues: tRNA1(Val) (adenine(37)-N6)-methyltransferase (232 aa).

It belongs to the methyltransferase superfamily. tRNA (adenine-N(6)-)-methyltransferase family.

It localises to the cytoplasm. The enzyme catalyses adenosine(37) in tRNA1(Val) + S-adenosyl-L-methionine = N(6)-methyladenosine(37) in tRNA1(Val) + S-adenosyl-L-homocysteine + H(+). In terms of biological role, specifically methylates the adenine in position 37 of tRNA(1)(Val) (anticodon cmo5UAC). The sequence is that of tRNA1(Val) (adenine(37)-N6)-methyltransferase from Pseudoalteromonas translucida (strain TAC 125).